The following is a 466-amino-acid chain: 3-isopropylmalate dehydratase large subunit (466 aa).

Residues Cys-347, Cys-407, and Cys-410 each coordinate [4Fe-4S] cluster.

It belongs to the aconitase/IPM isomerase family. LeuC type 1 subfamily. Heterodimer of LeuC and LeuD. The cofactor is [4Fe-4S] cluster.

The enzyme catalyses (2R,3S)-3-isopropylmalate = (2S)-2-isopropylmalate. Its pathway is amino-acid biosynthesis; L-leucine biosynthesis; L-leucine from 3-methyl-2-oxobutanoate: step 2/4. Its function is as follows. Catalyzes the isomerization between 2-isopropylmalate and 3-isopropylmalate, via the formation of 2-isopropylmaleate. In Klebsiella pneumoniae subsp. pneumoniae (strain ATCC 700721 / MGH 78578), this protein is 3-isopropylmalate dehydratase large subunit.